We begin with the raw amino-acid sequence, 315 residues long: Glycine--tRNA ligase alpha subunit (315 aa).

It belongs to the class-II aminoacyl-tRNA synthetase family. Tetramer of two alpha and two beta subunits.

It is found in the cytoplasm. It carries out the reaction tRNA(Gly) + glycine + ATP = glycyl-tRNA(Gly) + AMP + diphosphate. This Pseudomonas paraeruginosa (strain DSM 24068 / PA7) (Pseudomonas aeruginosa (strain PA7)) protein is Glycine--tRNA ligase alpha subunit.